Consider the following 1266-residue polypeptide: MAAVGPASPPPPPLWMHRDLSRAAAEELLARAGRDGSFLVRDSESVSGAYALCVLFQKHVHTYRILPDEENFLAVQTSQGVQPKRFKTLPELIQLYLQPSQGLVTTLLYPVEREETTEDRDYSDGEDEKPPLPPRTASTSSMTGSALVSTDTPPENVTAANGLSTISHEYLKGNYALDLEAVKQGANSLPHLNKTLLSSCKRLHGEVDKVLCGLEILSKVFDQQSASMVSRMIQQSMSQGGDQELEHLVTKLAILKDLLSSIEKKALKALQDMSSSTPAISPLLSIRNKVIPVQTFEVKLDVYLADLTKIGKSQKYSLSVDVEGGKLVVMKKMKDAQEDWNTFTHDKIRQLIKSQRVQNKLGIVFEKEKDKSQRKDFIFASAKKREAFCQLLQLMKNKHSNQDEPDMISIFIGTWNMGSVPAPKPLGSWILSRGLGKTLDEMAVTIPHDIYVFGTQENSVCDKEWVETLRCSLKEYTDMEYKPIAVQTLWNIKIVVLVKAEHENRISHVGMSSVKTGIANTLGNKGAVGVSFMFNGTSFGFVNCHLTSGNEKIHRRNQNYLDILRQLSLGDKQLNSFDISLRFTHLFWFGDLNYRLDMDIQEILNYINRKEFDPLLKVDQLNLEREKNKIFLRFAEEEISYPPTYRYERGSRDTYVWQKQKATGMRTNVPSWCDRILWKSYPETHIVCNSYGCTDDIVTSDHSPVFGTFEVGVTSQFVSKKGLPKSSEQAYIEFENIEAIVKTASRTKFFIEFYSTCLEEFKKSYENDTQSSDNVNFLRVGWSSKQLTTLKPILSDIEYLQDQHLLLTVKSLDGYESYGECVLALKSMIGSTAQQFHTYLSHRGEETGNIRGSMRVRVPSERMGTRERLYEWISVDKDDMGGPKGRTLPPRTSHDYVKPTSSSSSRKHGSAELSRVSEEGEKSSTSRHTHTKEENTHNRGKQDPFESDATTCKNSFNNPAYYILEGVPNQSAALASDILPGSALPPLANKTTAPPAGSVGKSKPPSGSSAQGRWQTSGRSVRPISEEGSSEDDGNIGPHTGSLNRPPPDFPPPPLPKAALEMSENSFGKPRVFSDLADGKIPPPSKPLVSPGLTPPPGGAPGGGVAFCIESPPVLSPNSAPFRRGGGASALDDQSCSVLQMAKTLSEVEYPSGRERGASQGPTGPQLRGLSFPSHPIQEESIAEDLPEEGGLWGAESSSSSLSVDCSVGEWLQKLGLQHYEEGLLHNGWDDLEFLSDITEEDLEEAGVRDPAHKKILLASLKQQQK.

Residues 15–111 form the SH2 domain; the sequence is WMHRDLSRAA…GLVTTLLYPV (97 aa). Basic and acidic residues predominate over residues 114 to 123; that stretch reads EETTEDRDYS. Disordered regions lie at residues 114–159 and 879–951; these read EETT…NVTA and DMGG…DATT. Over residues 136 to 159 the composition is skewed to polar residues; that stretch reads TASTSSMTGSALVSTDTPPENVTA. 2 stretches are compositionally biased toward basic and acidic residues: residues 915–924 and 931–944; these read RVSEEGEKSS and TKEENTHNRGKQDP. The NPXY motif motif lies at 958–961; it reads NPAY. At Tyr-961 the chain carries Phosphotyrosine. Disordered regions lie at residues 986-1132 and 1147-1174; these read PLAN…SALD and EVEYPSGRERGASQGPTGPQLRGLSFPS. The segment covering 994–1012 has biased composition (low complexity); it reads PPAGSVGKSKPPSGSSAQG. Positions 1045 to 1056 are enriched in pro residues; the sequence is RPPPDFPPPPLP. An SAM domain is found at 1203–1266; the sequence is SVDCSVGEWL…LLASLKQQQK (64 aa).

The protein belongs to the inositol 1,4,5-trisphosphate 5-phosphatase family. Tyrosine phosphorylated by the members of the SRC family after exposure to a diverse array of extracellular stimuli.

The protein resides in the cytoplasm. It is found in the cytosol. It localises to the cytoskeleton. Its subcellular location is the membrane. The protein localises to the cell projection. The protein resides in the filopodium. It is found in the lamellipodium. It localises to the nucleus. Its subcellular location is the nucleus speckle. It catalyses the reaction a 1,2-diacyl-sn-glycero-3-phospho-(1D-myo-inositol-3,4,5-trisphosphate) + H2O = a 1,2-diacyl-sn-glycero-3-phospho-(1D-myo-inositol-3,4-bisphosphate) + phosphate. In terms of biological role, phosphatidylinositol (PtdIns) phosphatase that specifically hydrolyzes the 5-phosphate of phosphatidylinositol-3,4,5-trisphosphate (PtdIns(3,4,5)P3) to produce PtdIns(3,4)P2, thereby negatively regulating the PI3K (phosphoinositide 3-kinase) pathways. Plays a central role in regulation of PI3K-dependent insulin signaling, although the precise molecular mechanisms and signaling pathways remain unclear. Part of a signaling pathway that regulates actin cytoskeleton remodeling. Required for the maintenance and dynamic remodeling of actin structures as well as in endocytosis, having a major impact on ligand-induced EGFR internalization and degradation. Participates in regulation of cortical and submembraneous actin. Regulates cell adhesion and cell spreading. Acts as a negative regulator of the FC-gamma-RIIA receptor (FCGR2A). Mediates signaling from the FC-gamma-RIIB receptor (FCGR2B), playing a central role in terminating signal transduction from activating immune/hematopoietic cell receptor systems. May also hydrolyze PtdIns(1,3,4,5)P4, and could thus affect the levels of the higher inositol polyphosphates like InsP6. The protein is Phosphatidylinositol 3,4,5-trisphosphate 5-phosphatase 2A (inppl1a) of Danio rerio (Zebrafish).